The sequence spans 358 residues: uncharacterized protein (358 aa).

Residue 207-214 (AAVKDGKT) coordinates ATP.

This is an uncharacterized protein from Bacillus subtilis (strain 168).